Here is a 296-residue protein sequence, read N- to C-terminus: MKVLVTALIISFSTAVLTVPVSIITAPLSVETIPGSSLDSTKVLGKLEAAYAQYGADSTSFKNSLQNIINAYMSIAADYEAQAGILEVRADIAEAAKNDVLATELEIKGDALEALAEGYTKTAEMLQEFLKLISEHEHKLSVVFREVKSGMIGTAAMESRLRPQATSSLPATGGQPSTGGKPTTGGQPTTGGQPSTGGQPSTGGQPTTGGQSITGGQPTTGGQPTTGGLPTTGGQPSTGGQPTTGGQPTTGGQPSTGGQPSTGGHQQLGVNQPEETPAPNRQLKMFRHYSKVCWQI.

Positions 1–18 (MKVLVTALIISFSTAVLT) are cleaved as a signal peptide. A disordered region spans residues 157–280 (MESRLRPQAT…NQPEETPAPN (124 aa)). A compositionally biased stretch (low complexity) spans 172–264 (TGGQPSTGGK…STGGQPSTGG (93 aa)).

As to expression, component of the acid-insoluble and acid-soluble organic matrix of calcified layers of the shell (at protein level).

It is found in the secreted. In Lottia gigantea (Giant owl limpet), this protein is Glycine and tyrosine-rich protein.